A 91-amino-acid chain; its full sequence is Small ribosomal subunit protein uS19 (91 aa).

It belongs to the universal ribosomal protein uS19 family.

Its function is as follows. Protein S19 forms a complex with S13 that binds strongly to the 16S ribosomal RNA. This Acinetobacter baumannii (strain AB307-0294) protein is Small ribosomal subunit protein uS19.